Consider the following 140-residue polypeptide: ATP synthase epsilon chain (140 aa).

This sequence belongs to the ATPase epsilon chain family. In terms of assembly, F-type ATPases have 2 components, CF(1) - the catalytic core - and CF(0) - the membrane proton channel. CF(1) has five subunits: alpha(3), beta(3), gamma(1), delta(1), epsilon(1). CF(0) has three main subunits: a, b and c.

It is found in the cell inner membrane. Functionally, produces ATP from ADP in the presence of a proton gradient across the membrane. The chain is ATP synthase epsilon chain from Vibrio parahaemolyticus serotype O3:K6 (strain RIMD 2210633).